The chain runs to 351 residues: Phosphate acyltransferase (351 aa).

Belongs to the PlsX family. As to quaternary structure, homodimer. Probably interacts with PlsY.

It is found in the cytoplasm. It catalyses the reaction a fatty acyl-[ACP] + phosphate = an acyl phosphate + holo-[ACP]. It participates in lipid metabolism; phospholipid metabolism. Functionally, catalyzes the reversible formation of acyl-phosphate (acyl-PO(4)) from acyl-[acyl-carrier-protein] (acyl-ACP). This enzyme utilizes acyl-ACP as fatty acyl donor, but not acyl-CoA. The polypeptide is Phosphate acyltransferase (Maricaulis maris (strain MCS10) (Caulobacter maris)).